We begin with the raw amino-acid sequence, 180 residues long: 6,7-dimethyl-8-ribityllumazine synthase (180 aa).

5-amino-6-(D-ribitylamino)uracil contacts are provided by residues F23, 61–63 (SFE), and 85–87 (AVI). 90–91 (QT) contributes to the (2S)-2-hydroxy-3-oxobutyl phosphate binding site. The Proton donor role is filled by H93. 5-amino-6-(D-ribitylamino)uracil is bound at residue F118. R132 is a binding site for (2S)-2-hydroxy-3-oxobutyl phosphate.

Belongs to the DMRL synthase family.

The enzyme catalyses (2S)-2-hydroxy-3-oxobutyl phosphate + 5-amino-6-(D-ribitylamino)uracil = 6,7-dimethyl-8-(1-D-ribityl)lumazine + phosphate + 2 H2O + H(+). The protein operates within cofactor biosynthesis; riboflavin biosynthesis; riboflavin from 2-hydroxy-3-oxobutyl phosphate and 5-amino-6-(D-ribitylamino)uracil: step 1/2. Functionally, catalyzes the formation of 6,7-dimethyl-8-ribityllumazine by condensation of 5-amino-6-(D-ribitylamino)uracil with 3,4-dihydroxy-2-butanone 4-phosphate. This is the penultimate step in the biosynthesis of riboflavin. The polypeptide is 6,7-dimethyl-8-ribityllumazine synthase (Gloeobacter violaceus (strain ATCC 29082 / PCC 7421)).